The sequence spans 205 residues: uncharacterized protein (205 aa).

It belongs to the IIV-6 170L family.

This is an uncharacterized protein from Invertebrate iridescent virus 3 (IIV-3).